A 237-amino-acid polypeptide reads, in one-letter code: Phosphoribosylaminoimidazole-succinocarboxamide synthase (237 aa).

This sequence belongs to the SAICAR synthetase family.

The enzyme catalyses 5-amino-1-(5-phospho-D-ribosyl)imidazole-4-carboxylate + L-aspartate + ATP = (2S)-2-[5-amino-1-(5-phospho-beta-D-ribosyl)imidazole-4-carboxamido]succinate + ADP + phosphate + 2 H(+). Its pathway is purine metabolism; IMP biosynthesis via de novo pathway; 5-amino-1-(5-phospho-D-ribosyl)imidazole-4-carboxamide from 5-amino-1-(5-phospho-D-ribosyl)imidazole-4-carboxylate: step 1/2. The polypeptide is Phosphoribosylaminoimidazole-succinocarboxamide synthase (Pseudomonas fluorescens (strain SBW25)).